The sequence spans 576 residues: Arginine--tRNA ligase (576 aa).

The 'HIGH' region signature appears at 121–131 (PNLAKEMHVGH).

It belongs to the class-I aminoacyl-tRNA synthetase family. In terms of assembly, monomer.

Its subcellular location is the cytoplasm. It carries out the reaction tRNA(Arg) + L-arginine + ATP = L-arginyl-tRNA(Arg) + AMP + diphosphate. The polypeptide is Arginine--tRNA ligase (Alteromonas mediterranea (strain DSM 17117 / CIP 110805 / LMG 28347 / Deep ecotype)).